The sequence spans 1204 residues: Major DNA-binding protein (1204 aa).

Residues 289 to 314 form a disordered region; that stretch reads SGTTTARGARRNDVNSTSKPSPSGGF. A zinc finger lies at 497 to 510; that stretch reads CSLCEKHTRPVCAH. 2 short sequence motifs (required for filament formation) span residues 841 to 842 and 1146 to 1148; these read FW and FNF. The required for nuclear localization stretch occupies residues 1177–1204; it reads LKRPPEDDELFDLSGIPIKHGNITMEMI.

This sequence belongs to the herpesviridae major DNA-binding protein family. As to quaternary structure, homooligomers. Forms double-helical filaments necessary for the formation of replication compartments within the host nucleus. Interacts with the origin-binding protein. Interacts with the helicase primase complex; this interaction stimulates primer synthesis activity of the helicase-primase complex. Interacts with the DNA polymerase. Interacts with the alkaline exonuclease; this interaction increases its nuclease processivity.

The protein resides in the host nucleus. Functionally, plays several crucial roles in viral infection. Participates in the opening of the viral DNA origin to initiate replication by interacting with the origin-binding protein. May disrupt loops, hairpins and other secondary structures present on ssDNA to reduce and eliminate pausing of viral DNA polymerase at specific sites during elongation. Promotes viral DNA recombination by performing strand-transfer, characterized by the ability to transfer a DNA strand from a linear duplex to a complementary single-stranded DNA circle. Can also catalyze the renaturation of complementary single strands. Additionally, reorganizes the host cell nucleus, leading to the formation of prereplicative sites and replication compartments. This process is driven by the protein which can form double-helical filaments in the absence of DNA. The sequence is that of Major DNA-binding protein from Homo sapiens (Human).